The following is a 204-amino-acid chain: Prephenate decarboxylase (204 aa).

Belongs to the prephenate decarboxylase family.

It localises to the cytoplasm. It carries out the reaction prephenate + H(+) = 3-[(4R)-4-hydroxycyclohexa-1,5-dien-1-yl]-2-oxopropanoate + CO2. Its pathway is antibiotic biosynthesis; bacilysin biosynthesis. In terms of biological role, part of the bacABCDEF operon responsible for the biosynthesis of the nonribosomally synthesized dipeptide antibiotic bacilysin, composed of L-alanine and L-anticapsin. Bacilysin is an irreversible inactivator of the glutaminase domain of glucosamine synthetase. BacA is an unusual prephenate decarboxylase that avoids the typical aromatization of the cyclohexadienol ring of prephenate. BacA catalyzes the protonation of prephenate (1-carboxy-4-hydroxy-alpha-oxo-2,5-cyclohexadiene-1-propanoic acid) at C6 position, followed by a decarboxylation to produce the endocyclic-delta(4),delta(8)-7R-dihydro-hydroxyphenylpyruvate (en-H2HPP). En-H2HPP is able to undergo a slow nonenzymatic isomerization to produce the exocyclic-delta(3),delta(5)-dihydro-hydroxyphenylpyruvate (ex-H2HPP). BacA isomerizes only the pro-R double bond in prephenate. The protein is Prephenate decarboxylase of Bacillus subtilis (strain 168).